A 570-amino-acid chain; its full sequence is Putative periplasmic trehalase (570 aa).

The N-terminal stretch at 1–34 is a signal peptide; that stretch reads MIPPEIRRSVLLQKAIKLALAGTLLTFASFSATA. Substrate-binding positions include Arg-159, 166–167, Asn-203, 212–214, 284–286, and Gly-317; these read WD, RSQ, and RPE. Active-site proton donor/acceptor residues include Asp-319 and Glu-503. A substrate-binding site is contributed by Glu-518. The interval 544 to 570 is disordered; the sequence is KPCDSVPSTRPASLSATPTKTPSAATQ. Positions 554–570 are enriched in low complexity; that stretch reads PASLSATPTKTPSAATQ.

The protein belongs to the glycosyl hydrolase 37 family. Monomer.

The protein resides in the periplasm. It catalyses the reaction alpha,alpha-trehalose + H2O = alpha-D-glucose + beta-D-glucose. Provides the cells with the ability to utilize trehalose at high osmolarity by splitting it into glucose molecules that can subsequently be taken up by the phosphotransferase-mediated uptake system. The sequence is that of Putative periplasmic trehalase from Salmonella typhi.